Here is a 446-residue protein sequence, read N- to C-terminus: Histidine--tRNA ligase (446 aa).

Belongs to the class-II aminoacyl-tRNA synthetase family. Homodimer.

Its subcellular location is the cytoplasm. It carries out the reaction tRNA(His) + L-histidine + ATP = L-histidyl-tRNA(His) + AMP + diphosphate + H(+). This is Histidine--tRNA ligase from Burkholderia cenocepacia (strain HI2424).